The following is a 638-amino-acid chain: Sorting nexin-41 (638 aa).

Residues 1-14 show a composition bias toward low complexity; sequence MDSDTSPNPFASSP. Residues 1–69 form a disordered region; sequence MDSDTSPNPF…MGATVPGPKP (69 aa). Pro residues predominate over residues 15–30; the sequence is PSSPSPRPSLPPPVPR. Residues 84–201 form the PX domain; the sequence is GEQVHIVDAL…HRFLEEDVSW (118 aa). A 1,2-diacyl-sn-glycero-3-phospho-(1D-myo-inositol-3-phosphate) is bound by residues arginine 118, serine 120, lysine 144, and arginine 168. Disordered regions lie at residues 215–239, 408–432, and 545–638; these read KNPL…SEAP, LERG…RERA, and PHPN…LGPL. Residues 225–239 are compositionally biased toward low complexity; sequence PTFQPTTPTSPSEAP. Residues 423-432 show a composition bias toward basic and acidic residues; it reads EAARDERERA. The span at 552–562 shows a compositional bias: low complexity; the sequence is QTQTQVQSQQS. Basic and acidic residues predominate over residues 585-601; the sequence is MKNEIERVEIEIADKPL.

This sequence belongs to the sorting nexin family.

It localises to the endosome membrane. Its subcellular location is the endomembrane system. Its function is as follows. May be required for cytoplasm to vacuole transport (Cvt) and pexophagy. The chain is Sorting nexin-41 (SNX41) from Cryptococcus neoformans var. neoformans serotype D (strain B-3501A) (Filobasidiella neoformans).